Consider the following 500-residue polypeptide: Zinc finger protein 689 (500 aa).

Residues 1–24 are disordered; that stretch reads MAPPSAPLLEQAPGEVGPTRRRGR. The KRAB domain maps to 29–100; sequence LKFADVAVYF…AALDPQEYRR (72 aa). A disordered region spans residues 110-144; it reads TRQKNEEKEVFPPKDVPRKGKRGRKPSKPRLIARQ. Over residues 112–127 the composition is skewed to basic and acidic residues; sequence QKNEEKEVFPPKDVPR. Residues 128 to 137 are compositionally biased toward basic residues; sequence KGKRGRKPSK. Residues 149–171 form a C2H2-type 1; degenerate zinc finger; the sequence is PICPDCGCTFPDLPALESHKCAQ. 10 consecutive C2H2-type zinc fingers follow at residues 177 to 199, 205 to 227, 233 to 255, 261 to 283, 289 to 311, 317 to 339, 345 to 367, 373 to 395, 401 to 423, and 429 to 451; these read YPCP…RRAH, YVCD…QVIH, YHCP…RTTH, HQCP…QRTH, YTCL…QRIH, YPCP…RRVH, YACE…QLLH, YPCP…RSTH, HACD…RRVH, and YACD…QLLH. A Glycyl lysine isopeptide (Lys-Gly) (interchain with G-Cter in SUMO2) cross-link involves residue Lys455. Residues 457–482 form a C2H2-type 12 zinc finger; that stretch reads FPCLECGRCFRQRWSLAVHKCCPNTH.

The protein belongs to the krueppel C2H2-type zinc-finger protein family.

It localises to the nucleus. May be involved in transcriptional regulation. The sequence is that of Zinc finger protein 689 (Znf689) from Rattus norvegicus (Rat).